A 989-amino-acid chain; its full sequence is Autotransporter adhesin/invasin TibA (989 aa).

The N-terminal stretch at 1–54 (MNKVYNTVWNESTGTWVVTSELTRKGGLRPRQIKRTVLAGLIAGLLMPSMPALA) is a signal peptide. Ser-74, Ser-86, Ser-93, Ser-94, Ser-97, Ser-100, Ser-112, Ser-113, Ser-116, Ser-119, Ser-124, Ser-131, Ser-132, and Ser-135 each carry an O-alpha-linked (D-glycero-D-manno-heptose) serine glycan. A run of 12 repeats spans residues 82–100 (TTINSGGKQYVSSGGSATS), 101–119 (TTINIGGVQHVSSGGSATS), 120–138 (STINSGGHQHVSSGGSATN), 139–157 (TTVNNGGRQTVFSGGSAMG), 158–176 (TIINSGGDQYVISGGSATS), 177–195 (ASVTSGARQFVSSGGIVKA), 196–214 (TSVNSGGRQYVRDGGSATD), 215–233 (TVLNNTGRQFVSSGGSAAK), 234–251 (TTINSGGGMYLYGGSATG), 252–270 (TSIYNGGRQYVSSGGSATN), 271–289 (TTVYSGGRQHVYIDGNVTE), and 290–308 (TTITSGGMLQVEAGGSASK). Residues 82–308 (TTINSGGKQY…QVEAGGSASK (227 aa)) form a 12 X 19 AA approximate repeats region. Residues 110-123 (HVSSGGSATSSTIN) are compositionally biased toward polar residues. Residues 110 to 146 (HVSSGGSATSSTINSGGHQHVSSGGSATNTTVNNGGR) form a disordered region. A compositionally biased stretch (low complexity) spans 124-135 (SGGHQHVSSGGS). Positions 136–146 (ATNTTVNNGGR) are enriched in polar residues. 21 O-alpha-linked (D-glycero-D-manno-heptose) serine glycosylation sites follow: Ser-151, Ser-154, Ser-162, Ser-170, Ser-176, Ser-181, Ser-188, Ser-189, Ser-200, Ser-226, Ser-227, Ser-230, Ser-238, Ser-248, Ser-263, Ser-264, Ser-275, Ser-294, Ser-305, Ser-313, and Ser-322. Residues 623–686 (WYLKADTPPP…GTSSSPVRRT (64 aa)) are disordered. Residues 629-638 (TPPPVTPPTN) show a composition bias toward pro residues. A run of 8 repeats spans residues 639-643 (PDADN), 644-648 (PDAGN), 649-653 (PDAGN), 654-658 (PDAGN), 659-663 (PDAGN), 664-668 (PDAGK), 669-673 (PGTGK), and 674-678 (PDAGT). The span at 639–667 (PDADNPDAGNPDAGNPDAGNPDAGNPDAG) shows a compositional bias: low complexity. Positions 639 to 678 (PDADNPDAGNPDAGNPDAGNPDAGNPDAGKPGTGKPDAGT) are 8 X 5 AA repeats of P-[DG]-[AGT]-[DGA]-[NKT]. The 269-residue stretch at 721 to 989 (NTRAPGGVWG…TGGVGFRINF (269 aa)) folds into the Autotransporter domain.

In terms of assembly, homohexamer. Glycosylated by TibC. Glycosylation is required for adhesion to and invasion of host cells. Glycosylation is dispensable for bacterial autoaggregation and biofilm formation.

The protein resides in the cell outer membrane. Mediates both adhesion to and invasion of human intestine epithelial cells. Also mediates bacterial cell aggregation via intercellular TibA-TibA interaction. Enhances biofilm formation. The chain is Autotransporter adhesin/invasin TibA from Escherichia coli O78:H11 (strain H10407 / ETEC).